The chain runs to 170 residues: ATP synthase subunit b (170 aa).

A helical transmembrane segment spans residues 25–45; the sequence is LIPNGTFFAVLIIFLIVLGVI. The disordered stretch occupies residues 121-147; that stretch reads EVAQTLTQADQQLSAQGDQVRSGLESS. The span at 122–139 shows a compositional bias: polar residues; it reads VAQTLTQADQQLSAQGDQ.

Belongs to the ATPase B chain family. As to quaternary structure, F-type ATPases have 2 components, F(1) - the catalytic core - and F(0) - the membrane proton channel. F(1) has five subunits: alpha(3), beta(3), gamma(1), delta(1), epsilon(1). F(0) has three main subunits: a(1), b(2) and c(10-14). The alpha and beta chains form an alternating ring which encloses part of the gamma chain. F(1) is attached to F(0) by a central stalk formed by the gamma and epsilon chains, while a peripheral stalk is formed by the delta and b chains.

Its subcellular location is the cell membrane. Functionally, f(1)F(0) ATP synthase produces ATP from ADP in the presence of a proton or sodium gradient. F-type ATPases consist of two structural domains, F(1) containing the extramembraneous catalytic core and F(0) containing the membrane proton channel, linked together by a central stalk and a peripheral stalk. During catalysis, ATP synthesis in the catalytic domain of F(1) is coupled via a rotary mechanism of the central stalk subunits to proton translocation. In terms of biological role, component of the F(0) channel, it forms part of the peripheral stalk, linking F(1) to F(0). The chain is ATP synthase subunit b from Mycolicibacterium smegmatis (strain ATCC 700084 / mc(2)155) (Mycobacterium smegmatis).